The sequence spans 430 residues: Threonine synthase (430 aa).

Lys-108 carries the post-translational modification N6-(pyridoxal phosphate)lysine.

Belongs to the threonine synthase family. Pyridoxal 5'-phosphate serves as cofactor.

It catalyses the reaction O-phospho-L-homoserine + H2O = L-threonine + phosphate. It participates in amino-acid biosynthesis; L-threonine biosynthesis; L-threonine from L-aspartate: step 5/5. Its function is as follows. Catalyzes the gamma-elimination of phosphate from L-phosphohomoserine and the beta-addition of water to produce L-threonine. This Buchnera aphidicola subsp. Baizongia pistaciae (strain Bp) protein is Threonine synthase (thrC).